Consider the following 802-residue polypeptide: LPS-assembly protein LptD (802 aa).

Positions 1 to 25 (MARLFSLKPLVLALGLCFGTHCAAA) are cleaved as a signal peptide.

It belongs to the LptD family. As to quaternary structure, component of the lipopolysaccharide transport and assembly complex. Interacts with LptE and LptA.

The protein resides in the cell outer membrane. Its function is as follows. Together with LptE, is involved in the assembly of lipopolysaccharide (LPS) at the surface of the outer membrane. The sequence is that of LPS-assembly protein LptD from Neisseria meningitidis serogroup B (strain ATCC BAA-335 / MC58).